Here is a 102-residue protein sequence, read N- to C-terminus: UPF0235 protein Swol_0959 (102 aa).

It belongs to the UPF0235 family.

This Syntrophomonas wolfei subsp. wolfei (strain DSM 2245B / Goettingen) protein is UPF0235 protein Swol_0959.